We begin with the raw amino-acid sequence, 255 residues long: NAD kinase (255 aa).

The active-site Proton acceptor is Asp44. Residues 44–45 (DG), His49, 114–115 (NE), Asp144, Ala152, 155–160 (SAYNLS), and Gln216 each bind NAD(+).

The protein belongs to the NAD kinase family. It depends on a divalent metal cation as a cofactor.

Its subcellular location is the cytoplasm. It catalyses the reaction NAD(+) + ATP = ADP + NADP(+) + H(+). Functionally, involved in the regulation of the intracellular balance of NAD and NADP, and is a key enzyme in the biosynthesis of NADP. Catalyzes specifically the phosphorylation on 2'-hydroxyl of the adenosine moiety of NAD to yield NADP. The protein is NAD kinase of Rickettsia conorii (strain ATCC VR-613 / Malish 7).